The chain runs to 82 residues: Large ribosomal subunit protein uL24c (82 aa).

This sequence belongs to the universal ribosomal protein uL24 family. Part of the 50S ribosomal subunit.

The protein resides in the plastid. The protein localises to the chloroplast. Functionally, one of two assembly initiator proteins, it binds directly to the 5'-end of the 23S rRNA, where it nucleates assembly of the 50S subunit. The protein is Large ribosomal subunit protein uL24c (rpl24) of Phaeodactylum tricornutum (strain CCAP 1055/1).